Consider the following 229-residue polypeptide: Putative 3-methyladenine DNA glycosylase (229 aa).

This sequence belongs to the DNA glycosylase MPG family.

The protein is Putative 3-methyladenine DNA glycosylase of Enterococcus faecalis (strain ATCC 700802 / V583).